The following is an 89-amino-acid chain: Inner kinetochore subunit mhf2 (89 aa).

Belongs to the CENP-X/MHF2 family. As to quaternary structure, the MHF histone-fold complex is a heterotetramer of 2 mhf1-mhf2 heterodimers. Component of the inner kinetochore constitutive centromere-associated network (CCAN) (also known as central kinetochore Sim4 complex in fission yeast), which is composed of at least cnl2, cnp3, cnp20, fta1, fta2, fta3, fta4, fta6, fta7, mal2, mhf1, mhf2, mis6, mis15, mis17, sim4 and wip1.

The protein resides in the nucleus. The protein localises to the cytoplasm. In terms of biological role, component of a FANCM-MHF complex that promotes gene conversion at blocked replication forks, probably by reversal of the stalled fork. FANCM-MHF promotes non-crossover recombination. This chain is Inner kinetochore subunit mhf2, found in Schizosaccharomyces pombe (strain 972 / ATCC 24843) (Fission yeast).